The chain runs to 515 residues: FADH(2)-dependent monooxygenase TftD (515 aa).

100 to 104 (RLPDA) contacts substrate. Residues 151–153 (LNF), 157–160 (QTDR), and Thr-192 each bind FAD. 203 to 204 (GC) contacts substrate. Residue 457–460 (TMTR) participates in FAD binding.

It belongs to the FADH(2)-utilizing monooxygenase family. In terms of assembly, homotetramer. The chlorophenol-4-monooxygenase is composed of an oxygenase component TftD and a reductase component TftC.

The protein operates within xenobiotic degradation. Functionally, oxygenase component of a two-component system that degrades 2,4,5-trichlorophenol. Uses FADH(2) supplied by TftC to oxidize 2,4,5-trichlorophenol (2,4,5-TCP) to 2,5-dichloro-p-benzoquinone, which is chemically reduced to 2,5-dichloro-p-hydroquinone (2,5-DiCHQ). Then, TftD oxidizes the latter to 5-chloro-2-hydroxy-p-benzoquinone. This is FADH(2)-dependent monooxygenase TftD (tftD) from Burkholderia cepacia (Pseudomonas cepacia).